A 66-amino-acid polypeptide reads, in one-letter code: Large ribosomal subunit protein bL35 (66 aa).

The tract at residues 19-45 is disordered; the sequence is SGKVVAAQSTKRHGMTKRSKRSLRTRR. Residues 28-45 show a composition bias toward basic residues; sequence TKRHGMTKRSKRSLRTRR.

This sequence belongs to the bacterial ribosomal protein bL35 family.

This Anaplasma phagocytophilum (strain HZ) protein is Large ribosomal subunit protein bL35.